We begin with the raw amino-acid sequence, 307 residues long: HPr kinase/phosphorylase (307 aa).

Catalysis depends on residues histidine 136 and lysine 157. 151–158 (GESGIGKS) is an ATP binding site. Serine 158 is a binding site for Mg(2+). The active-site Proton acceptor; for phosphorylation activity. Proton donor; for dephosphorylation activity is aspartate 175. Residues 198-207 (LEVRGMGIID) are important for the catalytic mechanism of both phosphorylation and dephosphorylation. Position 199 (glutamate 199) interacts with Mg(2+). Arginine 240 is an active-site residue. The interval 261 to 266 (PIRPGR) is important for the catalytic mechanism of dephosphorylation.

This sequence belongs to the HPrK/P family. Homohexamer. It depends on Mg(2+) as a cofactor.

It catalyses the reaction [HPr protein]-L-serine + ATP = [HPr protein]-O-phospho-L-serine + ADP + H(+). It carries out the reaction [HPr protein]-O-phospho-L-serine + phosphate + H(+) = [HPr protein]-L-serine + diphosphate. Functionally, catalyzes the ATP- as well as the pyrophosphate-dependent phosphorylation of a specific serine residue in HPr, a phosphocarrier protein of the phosphoenolpyruvate-dependent sugar phosphotransferase system (PTS). HprK/P also catalyzes the pyrophosphate-producing, inorganic phosphate-dependent dephosphorylation (phosphorolysis) of seryl-phosphorylated HPr (P-Ser-HPr). The two antagonistic activities of HprK/P are regulated by several intracellular metabolites, which change their concentration in response to the absence or presence of rapidly metabolisable carbon sources (glucose, fructose, etc.) in the growth medium. Therefore, by controlling the phosphorylation state of HPr, HPrK/P is a sensor enzyme that plays a major role in the regulation of carbon metabolism and sugar transport: it mediates carbon catabolite repression (CCR), and regulates PTS-catalyzed carbohydrate uptake and inducer exclusion. This is HPr kinase/phosphorylase from Clostridium perfringens (strain ATCC 13124 / DSM 756 / JCM 1290 / NCIMB 6125 / NCTC 8237 / Type A).